Consider the following 808-residue polypeptide: MDKFAEIRKRLKQKHNEWLQQTAAERIEQDAGIKMTARTIQGLRITRNSKNDESSLHVDSATDLEMDVTGASKFESKKETFDYRPNTSSSRIVLTPKSNDCKTEKKLVSGDDVTEISRPTSSSAVEISELPEVCVKVVFSQPCDVSRYPSDATKVRITKCDHANWRGWRSFLHALGICNREIQDSFLEQAASGCSAHVKDVVTAFDRGENLELLCAMAGVNVCLVNVSDEEIELIKISPEPLTCVVRIDFVGSEIKCLPCHATDAALASLFKTALRVYDYGRRIPWMHLSETVTFLSLDKTRTRVNVSNLCFDDGWRNIFEALNNDYPELYLVPENGDPEARSRCFIDPERQIEEEERYRAAKEAYLKRMNTPLEWWQEEVLTLTDGEREPKLDEFFFRTLLPRIIRQNAHCGDNPTEKLPMIGFGFDAIMKSRAERASQMSIGAKGNAGKEVGLPLRYKQHVINFRKREMHQKNSNIMTGYLPGGLLHDTLGGIVICLRLDIFEDTVISVYGIYNGMKLIRLICMICVYSGINIPGRPYFVYEVGEGILLTPGMFEEYFTGARTVSRLTSTHGVIHLGKLERCVRQFNNYLSAFKIKPGEIIDRSRAPRCKAKEKKFVPRSVGKGVFYASDLANYPFEINRHDKRSGLFHVGEIDFQAAISSIWPQMMCHYMASEDREDKQDDEKSKSDNFLVPEAVDPSLVIPSAAIYDCGMSKVNPENAKVKTRGNKLLLPCGMLEHCRATSLTKHRCLLPYLGVLACDLPYGSERMPACLGCGRLYPQQILAKLCAQVRCPAWPSTSDCLIRSE.

It is found in the virion. This chain is Putative minor structural protein VP5, found in Rice ragged stunt virus (isolate Thailand) (RRSV).